Consider the following 333-residue polypeptide: Dehydrodolichyl diphosphate synthase complex subunit Dhdds (333 aa).

(2E,6E)-farnesyl diphosphate contacts are provided by Asp34, Gly35, Arg37, Arg38, and Arg85. Asp34 contacts Mg(2+). Isopentenyl diphosphate contacts are provided by Arg38, Arg85, Arg205, Arg211, and Ser213.

This sequence belongs to the UPP synthase family. As to quaternary structure, the active dehydrodolichyl diphosphate synthase complex is a heterotetramer composed of a dimer of heterodimer of DHDDS and NUS1. Interacts with NPC2. Mg(2+) serves as cofactor.

Its subcellular location is the endoplasmic reticulum membrane. The enzyme catalyses n isopentenyl diphosphate + (2E,6E)-farnesyl diphosphate = a di-trans,poly-cis-polyprenyl diphosphate + n diphosphate. Its pathway is protein modification; protein glycosylation. It participates in lipid metabolism. With NUS1, forms the dehydrodolichyl diphosphate synthase (DDS) complex, an essential component of the dolichol monophosphate (Dol-P) biosynthetic machinery. Both subunits contribute to enzymatic activity, i.e. condensation of multiple copies of isopentenyl pyrophosphate (IPP) to farnesyl pyrophosphate (FPP) to produce dehydrodolichyl diphosphate (Dedol-PP), a precursor of dolichol phosphate which is utilized as a sugar carrier in protein glycosylation in the endoplasmic reticulum (ER). Synthesizes long-chain polyprenols, mostly of C95 and C100 chain length. Regulates the glycosylation and stability of nascent NPC2, thereby promoting trafficking of LDL-derived cholesterol. The polypeptide is Dehydrodolichyl diphosphate synthase complex subunit Dhdds (Mus musculus (Mouse)).